Consider the following 67-residue polypeptide: Large ribosomal subunit protein uL29 (67 aa).

The protein belongs to the universal ribosomal protein uL29 family.

The protein is Large ribosomal subunit protein uL29 of Pelotomaculum thermopropionicum (strain DSM 13744 / JCM 10971 / SI).